Here is a 63-residue protein sequence, read N- to C-terminus: Cytochrome c oxidase subunit 7C, mitochondrial (63 aa).

The N-terminal 16 residues, 1 to 16, are a transit peptide targeting the mitochondrion; it reads MLGQSIRRFTTSVVRR. At 17–33 the chain is on the mitochondrial matrix side; sequence SHYEEGPGKNIPFSVEN. An N6-acetyllysine; alternate modification is found at K25. N6-succinyllysine; alternate is present on K25. Residues 34–60 traverse the membrane as a helical segment; that stretch reads KWRLLAMMTLFFGSGFAAPFFIVRHQL. The Mitochondrial intermembrane portion of the chain corresponds to 61 to 63; that stretch reads LKK.

It belongs to the cytochrome c oxidase VIIc family. Component of the cytochrome c oxidase (complex IV, CIV), a multisubunit enzyme composed of 14 subunits. The complex is composed of a catalytic core of 3 subunits MT-CO1, MT-CO2 and MT-CO3, encoded in the mitochondrial DNA, and 11 supernumerary subunits COX4I1 (or COX4I2), COX5A, COX5B, COX6A2 (or COX6A1), COX6B1 (or COX6B2), COX6C, COX7A1 (or COX7A2), COX7B, COX7C, COX8B and NDUFA4, which are encoded in the nuclear genome. The complex exists as a monomer or a dimer and forms supercomplexes (SCs) in the inner mitochondrial membrane with NADH-ubiquinone oxidoreductase (complex I, CI) and ubiquinol-cytochrome c oxidoreductase (cytochrome b-c1 complex, complex III, CIII), resulting in different assemblies (supercomplex SCI(1)III(2)IV(1) and megacomplex MCI(2)III(2)IV(2)). Interacts with RAB5IF. Liver, heart, muscle and brain, contain the same isoform of COX VIIc, but at different concentrations.

Its subcellular location is the mitochondrion inner membrane. The protein operates within energy metabolism; oxidative phosphorylation. Functionally, component of the cytochrome c oxidase, the last enzyme in the mitochondrial electron transport chain which drives oxidative phosphorylation. The respiratory chain contains 3 multisubunit complexes succinate dehydrogenase (complex II, CII), ubiquinol-cytochrome c oxidoreductase (cytochrome b-c1 complex, complex III, CIII) and cytochrome c oxidase (complex IV, CIV), that cooperate to transfer electrons derived from NADH and succinate to molecular oxygen, creating an electrochemical gradient over the inner membrane that drives transmembrane transport and the ATP synthase. Cytochrome c oxidase is the component of the respiratory chain that catalyzes the reduction of oxygen to water. Electrons originating from reduced cytochrome c in the intermembrane space (IMS) are transferred via the dinuclear copper A center (CU(A)) of subunit 2 and heme A of subunit 1 to the active site in subunit 1, a binuclear center (BNC) formed by heme A3 and copper B (CU(B)). The BNC reduces molecular oxygen to 2 water molecules using 4 electrons from cytochrome c in the IMS and 4 protons from the mitochondrial matrix. The chain is Cytochrome c oxidase subunit 7C, mitochondrial (COX7C) from Bos taurus (Bovine).